We begin with the raw amino-acid sequence, 240 residues long: Small ribosomal subunit protein uS2 (240 aa).

It belongs to the universal ribosomal protein uS2 family. In terms of assembly, component of the small ribosomal subunit. Mature ribosomes consist of a small (40S) and a large (60S) subunit. The 40S subunit contains about 33 different proteins and 1 molecule of RNA (18S). The 60S subunit contains about 49 different proteins and 3 molecules of RNA (25S, 5.8S and 5S). Interacts with RPS21.

Its subcellular location is the cytoplasm. Required for the assembly and/or stability of the 40S ribosomal subunit. Required for the processing of the 20S rRNA-precursor to mature 18S rRNA in a late step of the maturation of 40S ribosomal subunits. This Enterocytozoon bieneusi (strain H348) (Microsporidian parasite) protein is Small ribosomal subunit protein uS2.